The primary structure comprises 431 residues: MDEAVGDLKQALPCVAEAPTVHVEVHQRSGSTAKKEDVKLNVRKLLNRHNIVFGDYTWTEFDEPFLTRNVQSVSIVDTELKVKDPQPIDLSTCTVALHVFQLNEGGPSSENLEEETENIIAANHWLLPAAEFHGLWDSLVYDAEVKSHLLDYVMTTLLFSDKNVDSNLITWNRVVLLHGPPGTGKTSLCKALAQKLTIRLSSRYRYGQLIEINSHSLFSKWFSESGKLVTRMFQMIQDLIDDKDALVFVLIDEVESLTAARNACRAGTEPSDAIRVVNAVLTQIDQIKRHSNVVILTTSNITERIDVAFVDRADIRQYVGPPSAAAIFKIYLSCLEELMKCQIIYPRQQLLTLRELEMIGFIENNVSKLSLLLSEISRKSEGLSGRVLRKLPFLAHALYIQAPTVTIEGFLQALSLAVDRQFEDRKKLSCV.

N-acetylmethionine is present on M1. 179–186 contacts ATP; that stretch reads GPPGTGKT.

Belongs to the AAA ATPase family. PCH2 subfamily. Specifically interacts with the ligand binding domain of the thyroid receptor (TR). This interaction does not require the presence of thyroid hormone for its interaction. Interacts with proteasome subunit PSMA8; to participate in meiosis progression during spermatogenesis.

In terms of biological role, plays a key role in chromosome recombination and chromosome structure development during meiosis. Required at early steps in meiotic recombination that leads to non-crossovers pathways. Also needed for efficient completion of homologous synapsis by influencing crossover distribution along the chromosomes affecting both crossovers and non-crossovers pathways. Also required for development of higher-order chromosome structures and is needed for synaptonemal-complex formation. In males, required for efficient synapsis of the sex chromosomes and for sex body formation. Promotes early steps of the DNA double-strand breaks (DSBs) repair process upstream of the assembly of RAD51 complexes. Required for depletion of HORMAD1 and HORMAD2 from synapsed chromosomes. Plays a role in mitotic spindle assembly checkpoint (SAC) activation. The sequence is that of Pachytene checkpoint protein 2 homolog (TRIP13) from Sus scrofa (Pig).